The primary structure comprises 616 residues: Protein NRT1/ PTR FAMILY 2.11 (616 aa).

The interval 1-22 is disordered; the sequence is MERKPLELESTDNHQNPSSAVY. A run of 12 helical transmembrane segments spans residues 59-79, 87-107, 118-138, 159-179, 205-225, 233-253, 349-369, 392-412, 435-455, 483-503, 519-539, and 566-586; these read FEKL…TAVF, ATII…AAFL, LSVA…TAAV, GGQI…AGGI, FFNW…TLVV, WTIG…IFFA, VKCI…YLTI, FVIP…VFIV, LQRI…AGFV, AMWL…AAIG, FAGS…SFLI, and LFYF…LVMS.

The protein belongs to the major facilitator superfamily. Proton-dependent oligopeptide transporter (POT/PTR) (TC 2.A.17) family. Expressed in roots. Detected in shoots, stems and flowers. Expressed in veins and in the root vasculature with highest expression in lateral branching points.

It is found in the cell membrane. High-affinity, proton-dependent glucosinolate-specific transporter. Involved in apoplasmic phloem-loading of glucosinolates and in bidirectional long-distance transport of aliphatic but not indole glucosinolates. May be involved in removal of glucosinolates from the xylem in roots. The protein is Protein NRT1/ PTR FAMILY 2.11 (NPF2.11) of Arabidopsis thaliana (Mouse-ear cress).